A 399-amino-acid polypeptide reads, in one-letter code: Chorismate synthase (399 aa).

Residues Arg40 and Arg46 each contribute to the NADP(+) site. FMN is bound by residues 135 to 137 (RAS), 256 to 257 (QA), Gly301, 316 to 320 (KPIAT), and Arg342.

This sequence belongs to the chorismate synthase family. As to quaternary structure, homotetramer. FMNH2 serves as cofactor.

It catalyses the reaction 5-O-(1-carboxyvinyl)-3-phosphoshikimate = chorismate + phosphate. The protein operates within metabolic intermediate biosynthesis; chorismate biosynthesis; chorismate from D-erythrose 4-phosphate and phosphoenolpyruvate: step 7/7. Its function is as follows. Catalyzes the anti-1,4-elimination of the C-3 phosphate and the C-6 proR hydrogen from 5-enolpyruvylshikimate-3-phosphate (EPSP) to yield chorismate, which is the branch point compound that serves as the starting substrate for the three terminal pathways of aromatic amino acid biosynthesis. This reaction introduces a second double bond into the aromatic ring system. The polypeptide is Chorismate synthase (Pseudarthrobacter chlorophenolicus (strain ATCC 700700 / DSM 12829 / CIP 107037 / JCM 12360 / KCTC 9906 / NCIMB 13794 / A6) (Arthrobacter chlorophenolicus)).